A 298-amino-acid chain; its full sequence is Quinolinate synthase (298 aa).

The iminosuccinate site is built by His-19 and Ser-36. Cys-81 lines the [4Fe-4S] cluster pocket. Residues 107–109 and Ser-124 each bind iminosuccinate; that span reads YVN. Cys-168 contributes to the [4Fe-4S] cluster binding site. Residues 193–195 and Thr-210 contribute to the iminosuccinate site; that span reads HPE. A [4Fe-4S] cluster-binding site is contributed by Cys-254.

The protein belongs to the quinolinate synthase family. Type 2 subfamily. It depends on [4Fe-4S] cluster as a cofactor.

The protein resides in the cytoplasm. It carries out the reaction iminosuccinate + dihydroxyacetone phosphate = quinolinate + phosphate + 2 H2O + H(+). The protein operates within cofactor biosynthesis; NAD(+) biosynthesis; quinolinate from iminoaspartate: step 1/1. Functionally, catalyzes the condensation of iminoaspartate with dihydroxyacetone phosphate to form quinolinate. The polypeptide is Quinolinate synthase (Thermotoga petrophila (strain ATCC BAA-488 / DSM 13995 / JCM 10881 / RKU-1)).